A 233-amino-acid polypeptide reads, in one-letter code: uncharacterized protein (233 aa).

Positions 16 to 84 (KTLAKQVIER…TRGGTYFNDK (69 aa)) constitute an HTH gntR-type domain. Residues 44-63 (EMELMDILHVSRPVLREALS) constitute a DNA-binding region (H-T-H motif).

This is an uncharacterized protein from Bacillus subtilis (strain 168).